An 89-amino-acid polypeptide reads, in one-letter code: Small ribosomal subunit protein uS14 (89 aa).

This sequence belongs to the universal ribosomal protein uS14 family. As to quaternary structure, part of the 30S ribosomal subunit. Contacts proteins S3 and S10.

Functionally, binds 16S rRNA, required for the assembly of 30S particles and may also be responsible for determining the conformation of the 16S rRNA at the A site. This is Small ribosomal subunit protein uS14 from Chlorobium luteolum (strain DSM 273 / BCRC 81028 / 2530) (Pelodictyon luteolum).